Reading from the N-terminus, the 170-residue chain is Probable host range protein 2 (170 aa).

A disordered region spans residues 145 to 170 (SDSDSDVDDRAELHKRNNDSDSDDYT). Residues 152 to 163 (DDRAELHKRNND) show a composition bias toward basic and acidic residues.

The protein belongs to the poxviridae C7 protein family.

In terms of biological role, plays a role for multiplication of the virus in different cell types. The polypeptide is Probable host range protein 2 (Bos taurus (Bovine)).